We begin with the raw amino-acid sequence, 83 residues long: Acyl carrier protein MmaB (83 aa).

Residues 3–83 (DPVRQRILLA…LSQSELESPT (81 aa)) form the Carrier domain. The residue at position 39 (serine 39) is an O-(pantetheine 4'-phosphoryl)serine.

The protein belongs to the acyl carrier protein (ACP) family. Pantetheine 4'-phosphate is required as a cofactor.

The protein operates within lipid metabolism; fatty acid metabolism. Its function is as follows. Acyl-carrier protein (ACP) involved in the biosynthesis of a unique class of isonitrile lipopeptides (INLPs) that seem to play a role in metal acquisition in M.marinum. Is the dedicated ACP for the loading of activated acyl groups catalyzed by MmaC. The sequence is that of Acyl carrier protein MmaB from Mycobacterium marinum (strain ATCC BAA-535 / M).